Here is a 303-residue protein sequence, read N- to C-terminus: Taste receptor type 2 member 13 (303 aa).

The Extracellular segment spans residues 1–7 (MESALPS). The helical transmembrane segment at 8 to 28 (ILTLVIIAEFIIGNLSNGFIV) threads the bilayer. Residues 29–55 (LINYIDWVSKRELSSVDKLLIILAISR) lie on the Cytoplasmic side of the membrane. Residues 56-76 (IGLIWEILVSWFLALHYLAIF) traverse the membrane as a helical segment. Residues 77–85 (VSGTGLRIM) lie on the Extracellular side of the membrane. A helical membrane pass occupies residues 86-106 (IFSWIVSNHFSLWLATILSIF). Residues 107 to 128 (YLLKIASFSSPAFLYLKWRVNK) lie on the Cytoplasmic side of the membrane. Residues 129–149 (VILMILLGSLVFLFLNLIQIN) traverse the membrane as a helical segment. The Extracellular portion of the chain corresponds to 150 to 184 (IHIKDWLDRYEGNTTWNFSMSDFVTFSVSVKFTMT). 2 N-linked (GlcNAc...) asparagine glycosylation sites follow: asparagine 162 and asparagine 166. Residues 185-205 (MFSLTPFTVALISFSLLIFSL) traverse the membrane as a helical segment. Topologically, residues 206–232 (QKHLQKMQLNYKGHREPRTKVHTNALK) are cytoplasmic. A helical membrane pass occupies residues 233–253 (IVISFLLLYASFFLCILISWI). At 254 to 261 (SELYQNTA) the chain is on the extracellular side. The chain crosses the membrane as a helical span at residues 262–282 (IYMLCETIGLFYPSSHSFLLI). Residues 283–303 (LGNPKLRQAFLLVAAKVWAKR) lie on the Cytoplasmic side of the membrane.

This sequence belongs to the G-protein coupled receptor T2R family.

The protein localises to the membrane. In terms of biological role, receptor that may play a role in the perception of bitterness and is gustducin-linked. May play a role in sensing the chemical composition of the gastrointestinal content. The activity of this receptor may stimulate alpha gustducin, mediate PLC-beta-2 activation and lead to the gating of TRPM5. This chain is Taste receptor type 2 member 13 (TAS2R13), found in Pongo pygmaeus (Bornean orangutan).